We begin with the raw amino-acid sequence, 318 residues long: Protoheme IX farnesyltransferase (318 aa).

Helical transmembrane passes span 31–51, 55–75, 98–118, 125–145, 153–173, 181–201, 206–228, 238–260, and 285–305; these read IILLLLITTAAGMGLAAQGPL, LAIATLIGGGLAAAAANTLNC, IQPFEAWAFALSLAALSFILL, LAAGLALAGIVFYVVIYTHGL, IVIGGAAGAIPPLVGWAAVTG, ILFAIVCLWTPPHFWALALMI, AAVKVPMLPVVVGNAATAQQILA, LALAWPLGAAGPFYSATALLLGL, and FSIFYLMLLCGAIAMDCLPGA.

This sequence belongs to the UbiA prenyltransferase family. Protoheme IX farnesyltransferase subfamily.

The protein resides in the cell inner membrane. The catalysed reaction is heme b + (2E,6E)-farnesyl diphosphate + H2O = Fe(II)-heme o + diphosphate. The protein operates within porphyrin-containing compound metabolism; heme O biosynthesis; heme O from protoheme: step 1/1. Converts heme B (protoheme IX) to heme O by substitution of the vinyl group on carbon 2 of heme B porphyrin ring with a hydroxyethyl farnesyl side group. The polypeptide is Protoheme IX farnesyltransferase (Synechococcus elongatus (strain ATCC 33912 / PCC 7942 / FACHB-805) (Anacystis nidulans R2)).